Here is a 518-residue protein sequence, read N- to C-terminus: Phytoene desaturase (neurosporene-forming) (518 aa).

Residue 14-47 participates in FAD binding; that stretch reads LVIGSGLGGLAAAMRLGAKGWRVTVIDKLDVPGG.

Belongs to the carotenoid/retinoid oxidoreductase family. FAD serves as cofactor.

It carries out the reaction 15-cis-phytoene + 3 A = all-trans-neurosporene + 3 AH2. It participates in carotenoid biosynthesis. Converts phytoene into all-trans-neurosporene as the major product, via the intermediary of phytofluene and zeta-carotene, by the introduction of three double bonds. In Cereibacter sphaeroides (strain ATCC 17023 / DSM 158 / JCM 6121 / CCUG 31486 / LMG 2827 / NBRC 12203 / NCIMB 8253 / ATH 2.4.1.) (Rhodobacter sphaeroides), this protein is Phytoene desaturase (neurosporene-forming) (crtI).